The sequence spans 375 residues: Peptide-N(4)-(N-acetyl-beta-glucosaminyl)asparagine amidase (375 aa).

Residues Cys129, Cys132, Cys163, and Cys166 each contribute to the Zn(2+) site. Cys189 acts as the Nucleophile in catalysis. Active-site residues include His219 and Asp236. Glu239 contacts substrate. Residues 345-375 (KIEVSRTHNIPTGRQTGDAEWTKSRGEDGNE) form a disordered region. Residues 364-375 (EWTKSRGEDGNE) show a composition bias toward basic and acidic residues.

This sequence belongs to the transglutaminase-like superfamily. PNGase family. Zn(2+) serves as cofactor.

Its subcellular location is the cytoplasm. It carries out the reaction Hydrolysis of an N(4)-(acetyl-beta-D-glucosaminyl)asparagine residue in which the glucosamine residue may be further glycosylated, to yield a (substituted) N-acetyl-beta-D-glucosaminylamine and a peptide containing an aspartate residue.. Its function is as follows. Specifically deglycosylates the denatured form of N-linked glycoproteins in the cytoplasm and assists their proteasome-mediated degradation. Cleaves the beta-aspartyl-glucosamine (GlcNAc) of the glycan and the amide side chain of Asn, converting Asn to Asp. Prefers proteins containing high-mannose over those bearing complex type oligosaccharides. Can recognize misfolded proteins in the endoplasmic reticulum that are exported to the cytosol to be destroyed and deglycosylate them, while it has no activity toward native proteins. Deglycosylation is a prerequisite for subsequent proteasome-mediated degradation of some, but not all, misfolded glycoproteins. This chain is Peptide-N(4)-(N-acetyl-beta-glucosaminyl)asparagine amidase (PNG1), found in Debaryomyces hansenii (strain ATCC 36239 / CBS 767 / BCRC 21394 / JCM 1990 / NBRC 0083 / IGC 2968) (Yeast).